A 396-amino-acid polypeptide reads, in one-letter code: 1-deoxy-D-xylulose 5-phosphate reductoisomerase (396 aa).

NADPH-binding residues include threonine 10, glycine 11, serine 12, isoleucine 13, asparagine 38, and asparagine 123. A 1-deoxy-D-xylulose 5-phosphate-binding site is contributed by lysine 124. Residue glutamate 125 coordinates NADPH. Aspartate 149 contributes to the Mn(2+) binding site. Residues serine 150, glutamate 151, serine 185, and histidine 208 each contribute to the 1-deoxy-D-xylulose 5-phosphate site. Glutamate 151 is a Mn(2+) binding site. Glycine 214 lines the NADPH pocket. 4 residues coordinate 1-deoxy-D-xylulose 5-phosphate: serine 221, asparagine 226, lysine 227, and glutamate 230. Glutamate 230 contributes to the Mn(2+) binding site.

It belongs to the DXR family. Mg(2+) serves as cofactor. It depends on Mn(2+) as a cofactor.

It catalyses the reaction 2-C-methyl-D-erythritol 4-phosphate + NADP(+) = 1-deoxy-D-xylulose 5-phosphate + NADPH + H(+). It functions in the pathway isoprenoid biosynthesis; isopentenyl diphosphate biosynthesis via DXP pathway; isopentenyl diphosphate from 1-deoxy-D-xylulose 5-phosphate: step 1/6. Its function is as follows. Catalyzes the NADPH-dependent rearrangement and reduction of 1-deoxy-D-xylulose-5-phosphate (DXP) to 2-C-methyl-D-erythritol 4-phosphate (MEP). In Shewanella halifaxensis (strain HAW-EB4), this protein is 1-deoxy-D-xylulose 5-phosphate reductoisomerase.